The sequence spans 724 residues: Propionyl-CoA carboxylase alpha chain, mitochondrial (724 aa).

The transit peptide at 1 to 48 directs the protein to the mitochondrion; sequence MAGQWVRTVALLAARRHWRRSSQQQLLGTLKHAPVYSYQCLVVSRSLS. The Biotin carboxylation domain occupies 58 to 505; it reads TFDKILIANR…STKFLSDVYP (448 aa). Lys-61 bears the N6-acetyllysine; alternate mark. Lys-61 carries the N6-succinyllysine; alternate modification. Position 115 is an N6-succinyllysine (Lys-115). Lys-146 carries the post-translational modification N6-acetyllysine; alternate. Lys-146 is modified (N6-succinyllysine; alternate). N6-acetyllysine is present on Lys-150. Residue Lys-173 coordinates ATP. The ATP-grasp domain maps to 177–374; sequence KLLAKRAKVN…LVQEMILVAK (198 aa). Position 184 is an N6-succinyllysine (Lys-184). Residue Lys-196 is modified to N6-acetyllysine; alternate. Residue Lys-196 is modified to N6-succinyllysine; alternate. ATP contacts are provided by residues 205–266, Glu-257, and Asn-292; that span reads AREI…PRHI. Residue Ser-248 is modified to Phosphoserine. An N6-succinyllysine modification is found at Lys-258. Residue Lys-324 is modified to N6-acetyllysine; alternate. Lys-324 carries the post-translational modification N6-succinyllysine; alternate. Mg(2+) contacts are provided by Glu-332, Glu-345, and Asn-347. Mn(2+) is bound by residues Glu-332, Glu-345, and Asn-347. Arg-349 is a catalytic residue. Residues Lys-381 and Lys-403 each carry the N6-succinyllysine modification. Phe-405 is a binding site for biotin. Lys-492 is subject to N6-acetyllysine. An N6-succinyllysine mark is found at Lys-498, Lys-509, Lys-554, and Lys-644. The region spanning 645–724 is the Biotinyl-binding domain; the sequence is FMLEKVPKDT…GEGDLLVELE (80 aa). An N6-biotinyllysine; by HLCS modification is found at Lys-690.

In terms of assembly, the holoenzyme is a dodecamer composed of 6 PCCA/alpha subunits and 6 PCCB/beta subunits. Interacts (via the biotin carboxylation domain) with SIRT4. Interacts with SIRT3 and SIRT5. Requires Mg(2+) as cofactor. Mn(2+) serves as cofactor. Biotin is required as a cofactor. Post-translationally, acetylated. In terms of processing, the biotin cofactor is covalently attached to the C-terminal biotinyl-binding domain and is required for the catalytic activity. Biotinylation is catalyzed by HLCS.

Its subcellular location is the mitochondrion matrix. It carries out the reaction propanoyl-CoA + hydrogencarbonate + ATP = (S)-methylmalonyl-CoA + ADP + phosphate + H(+). The catalysed reaction is butanoyl-CoA + hydrogencarbonate + ATP = (2S)-ethylmalonyl-CoA + ADP + phosphate + H(+). The protein operates within metabolic intermediate metabolism; propanoyl-CoA degradation; succinyl-CoA from propanoyl-CoA: step 1/3. This is one of the 2 subunits of the biotin-dependent propionyl-CoA carboxylase (PCC), a mitochondrial enzyme involved in the catabolism of odd chain fatty acids, branched-chain amino acids isoleucine, threonine, methionine, and valine and other metabolites. Propionyl-CoA carboxylase catalyzes the carboxylation of propionyl-CoA/propanoyl-CoA to D-methylmalonyl-CoA/(S)-methylmalonyl-CoA. Within the holoenzyme, the alpha subunit catalyzes the ATP-dependent carboxylation of the biotin carried by the biotin carboxyl carrier (BCC) domain, while the beta subunit then transfers the carboxyl group from carboxylated biotin to propionyl-CoA. Propionyl-CoA carboxylase also significantly acts on butyryl-CoA/butanoyl-CoA, which is converted to ethylmalonyl-CoA/(2S)-ethylmalonyl-CoA. Other alternative minor substrates include (2E)-butenoyl-CoA/crotonoyl-CoA. The polypeptide is Propionyl-CoA carboxylase alpha chain, mitochondrial (Mus musculus (Mouse)).